The sequence spans 143 residues: Sirohydrochlorin cobaltochelatase (143 aa).

Residue histidine 9 is the Proton acceptor of the active site. Residue histidine 9 coordinates Co(2+). Position 9 (histidine 9) interacts with Ni(2+). Residues glutamate 45 and 70-75 (LAHGVH) contribute to the substrate site. Histidine 75 is a binding site for Co(2+). Residue histidine 75 coordinates Ni(2+).

Belongs to the CbiX family. CbiXS subfamily. In terms of assembly, homotetramer; dimer of dimers.

It carries out the reaction Co-sirohydrochlorin + 2 H(+) = sirohydrochlorin + Co(2+). The enzyme catalyses Ni-sirohydrochlorin + 2 H(+) = sirohydrochlorin + Ni(2+). It functions in the pathway cofactor biosynthesis; adenosylcobalamin biosynthesis; cob(II)yrinate a,c-diamide from sirohydrochlorin (anaerobic route): step 1/10. Catalyzes the insertion of Co(2+) into sirohydrochlorin as part of the anaerobic pathway to cobalamin biosynthesis. Involved in the biosynthesis of the unique nickel-containing tetrapyrrole coenzyme F430, the prosthetic group of methyl-coenzyme M reductase (MCR), which plays a key role in methanogenesis and anaerobic methane oxidation. Catalyzes the insertion of Ni(2+) into sirohydrochlorin to yield Ni-sirohydrochlorin. This chain is Sirohydrochlorin cobaltochelatase, found in Methanopyrus kandleri (strain AV19 / DSM 6324 / JCM 9639 / NBRC 100938).